Here is a 447-residue protein sequence, read N- to C-terminus: uncharacterized protein (447 aa).

This is an uncharacterized protein from Mus musculus (Mouse).